A 152-amino-acid chain; its full sequence is Large ribosomal subunit protein bL9 (152 aa).

It belongs to the bacterial ribosomal protein bL9 family.

Functionally, binds to the 23S rRNA. This is Large ribosomal subunit protein bL9 from Mycobacterium ulcerans (strain Agy99).